The primary structure comprises 291 residues: 4-hydroxy-tetrahydrodipicolinate synthase (291 aa).

T47 contacts pyruvate. The Proton donor/acceptor role is filled by Y134. Residue K162 is the Schiff-base intermediate with substrate of the active site. Pyruvate is bound at residue I205.

This sequence belongs to the DapA family. Homotetramer; dimer of dimers.

The protein localises to the cytoplasm. The catalysed reaction is L-aspartate 4-semialdehyde + pyruvate = (2S,4S)-4-hydroxy-2,3,4,5-tetrahydrodipicolinate + H2O + H(+). It functions in the pathway amino-acid biosynthesis; L-lysine biosynthesis via DAP pathway; (S)-tetrahydrodipicolinate from L-aspartate: step 3/4. Catalyzes the condensation of (S)-aspartate-beta-semialdehyde [(S)-ASA] and pyruvate to 4-hydroxy-tetrahydrodipicolinate (HTPA). The protein is 4-hydroxy-tetrahydrodipicolinate synthase of Methanoculleus marisnigri (strain ATCC 35101 / DSM 1498 / JR1).